Here is a 185-residue protein sequence, read N- to C-terminus: Large ribosomal subunit protein uL5 (185 aa).

It belongs to the universal ribosomal protein uL5 family. Part of the 50S ribosomal subunit; part of the 5S rRNA/L5/L18/L25 subcomplex. Contacts the 5S rRNA and the P site tRNA. Forms a bridge to the 30S subunit in the 70S ribosome.

In terms of biological role, this is one of the proteins that bind and probably mediate the attachment of the 5S RNA into the large ribosomal subunit, where it forms part of the central protuberance. In the 70S ribosome it contacts protein S13 of the 30S subunit (bridge B1b), connecting the 2 subunits; this bridge is implicated in subunit movement. Contacts the P site tRNA; the 5S rRNA and some of its associated proteins might help stabilize positioning of ribosome-bound tRNAs. This chain is Large ribosomal subunit protein uL5, found in Rhizobium leguminosarum bv. trifolii (strain WSM2304).